Here is a 463-residue protein sequence, read N- to C-terminus: Sugar transporter ERD6-like 7 (463 aa).

The next 12 membrane-spanning stretches (helical) occupy residues 26–46, 69–89, 103–123, 126–146, 157–177, 181–201, 264–284, 299–319, 327–347, 357–377, 396–416, and 426–446; these read WMVYLSTFVAVCGSFAFGSCA, LFGSLLTFGAMIGAITSGPIA, AFCVVGWLAIIFAKGVVALDL, LATGYGMGAFSYVVPIFIAEI, TLNQILICTGVSVSFIIGTLV, VLALIGIIPCAASFLGLFFIP, VLIAFGLMVFQQFGGINGICF, LGMIIYAVLQVVITALNAPIV, LLLVSATGLVIGCLIAAVSFY, AVPVLAVVGIMVYIGSFSAGM, VAGGMATLVNWFGAWAVSYTF, and GTFLIYAAINALAIVFVIAIV.

The protein belongs to the major facilitator superfamily. Sugar transporter (TC 2.A.1.1) family.

It is found in the membrane. Sugar transporter. This is Sugar transporter ERD6-like 7 from Arabidopsis thaliana (Mouse-ear cress).